The chain runs to 357 residues: uncharacterized protein (357 aa).

The PNPLA domain maps to 27-196 (LVCEGGGQRG…SDAIPVKEAA (170 aa)). Positions 31-36 (GGGQRG) match the GXGXXG motif. The GXSXG motif lies at 59–63 (GTSAG). The Nucleophile role is filled by S61. Catalysis depends on D183, which acts as the Proton acceptor. Residues 183–185 (DGG) carry the DGA/G motif.

Functionally, probable lipid hydrolase. This is an uncharacterized protein from Escherichia coli (strain K12).